A 427-amino-acid chain; its full sequence is 3-phosphoshikimate 1-carboxyvinyltransferase (427 aa).

3-phosphoshikimate contacts are provided by lysine 22, serine 23, and arginine 27. Lysine 22 serves as a coordination point for phosphoenolpyruvate. Positions 96 and 124 each coordinate phosphoenolpyruvate. Residues serine 170, serine 171, glutamine 172, serine 198, aspartate 314, asparagine 337, and lysine 341 each contribute to the 3-phosphoshikimate site. Position 172 (glutamine 172) interacts with phosphoenolpyruvate. Aspartate 314 acts as the Proton acceptor in catalysis. Phosphoenolpyruvate is bound by residues arginine 345, arginine 387, and lysine 412.

Belongs to the EPSP synthase family. Monomer.

The protein resides in the cytoplasm. It carries out the reaction 3-phosphoshikimate + phosphoenolpyruvate = 5-O-(1-carboxyvinyl)-3-phosphoshikimate + phosphate. The protein operates within metabolic intermediate biosynthesis; chorismate biosynthesis; chorismate from D-erythrose 4-phosphate and phosphoenolpyruvate: step 6/7. Its function is as follows. Catalyzes the transfer of the enolpyruvyl moiety of phosphoenolpyruvate (PEP) to the 5-hydroxyl of shikimate-3-phosphate (S3P) to produce enolpyruvyl shikimate-3-phosphate and inorganic phosphate. This Sulfurovum sp. (strain NBC37-1) protein is 3-phosphoshikimate 1-carboxyvinyltransferase.